The sequence spans 197 residues: MSYTVRDHYFHKAKKEHYLARAVYKLQEIQDRYKILKPGNRVLDLGAAPGSWMQFAREIVGPSGLVVGVDLKGVEHRFPEGVVVLQGDVTDPELARSLSVEHGPFDVVLSDMAPSTSGIRVADSARSALLFESALEMARSALRPGGHFVAKLFQGAEFHVLLQAVKRDFEWVKVTKPDASRKQSKEIYVIGMRLRKS.

S-adenosyl-L-methionine contacts are provided by glycine 50, tryptophan 52, aspartate 70, aspartate 88, and aspartate 111. Lysine 151 (proton acceptor) is an active-site residue.

This sequence belongs to the class I-like SAM-binding methyltransferase superfamily. RNA methyltransferase RlmE family.

It localises to the cytoplasm. The enzyme catalyses uridine(2552) in 23S rRNA + S-adenosyl-L-methionine = 2'-O-methyluridine(2552) in 23S rRNA + S-adenosyl-L-homocysteine + H(+). In terms of biological role, specifically methylates the uridine in position 2552 of 23S rRNA at the 2'-O position of the ribose in the fully assembled 50S ribosomal subunit. The polypeptide is Ribosomal RNA large subunit methyltransferase E (Syntrophobacter fumaroxidans (strain DSM 10017 / MPOB)).